The chain runs to 276 residues: 4-deoxy-L-threo-5-hexosulose-uronate ketol-isomerase (276 aa).

Positions 194, 196, 201, and 243 each coordinate Zn(2+).

Belongs to the KduI family. Zn(2+) serves as cofactor.

It carries out the reaction 5-dehydro-4-deoxy-D-glucuronate = 3-deoxy-D-glycero-2,5-hexodiulosonate. It functions in the pathway glycan metabolism; pectin degradation; 2-dehydro-3-deoxy-D-gluconate from pectin: step 4/5. Functionally, catalyzes the isomerization of 5-dehydro-4-deoxy-D-glucuronate to 3-deoxy-D-glycero-2,5-hexodiulosonate. In Shouchella clausii (strain KSM-K16) (Alkalihalobacillus clausii), this protein is 4-deoxy-L-threo-5-hexosulose-uronate ketol-isomerase.